The chain runs to 92 residues: Small ribosomal subunit protein uS19c (92 aa).

The protein belongs to the universal ribosomal protein uS19 family.

The protein localises to the plastid. Functionally, protein S19 forms a complex with S13 that binds strongly to the 16S ribosomal RNA. This chain is Small ribosomal subunit protein uS19c, found in Aneura mirabilis (Parasitic liverwort).